A 54-amino-acid polypeptide reads, in one-letter code: Rubredoxin (54 aa).

Residues Met1–Glu54 form the Rubredoxin-like domain. 4 residues coordinate Fe cation: Cys6, Cys9, Cys39, and Cys42.

Belongs to the rubredoxin family. Fe(3+) serves as cofactor.

In terms of biological role, rubredoxin is a small nonheme, iron protein lacking acid-labile sulfide. Its single Fe, chelated to 4 Cys, functions as an electron acceptor and may also stabilize the conformation of the molecule. Functions as an intermediate component in the electron transfer chain: NADH-&gt;NROR-&gt;Rd-&gt;FprA1/2 in which Rd serves as the proximal electron donor to the FDPs that exhibit H(2)O-forming NADH oxidase activity. Also functions as the proximal electron donor to the Dfx and revRbr proteins that display superoxide reductase (SOR) and NADH peroxidase activity, respectively. Therefore, is a key electron carrier in an efficient multienzyme complex that can scavenge O(2) and reactive oxygen species (ROS), and thus plays an important role in the oxidative stress defense system in C.acetobutylicum, an obligate anaerobic bacterium. This Clostridium acetobutylicum (strain ATCC 824 / DSM 792 / JCM 1419 / IAM 19013 / LMG 5710 / NBRC 13948 / NRRL B-527 / VKM B-1787 / 2291 / W) protein is Rubredoxin (rd).